A 269-amino-acid chain; its full sequence is Serine/threonine-protein kinase ZRK7 (269 aa).

In terms of domain architecture, Protein kinase spans 80–269; sequence FDWSYAIGVD…KNRLMVTVIT (190 aa). ATP contacts are provided by residues 86–94 and K106; that span reads IGVDRFVWY. D205 (proton acceptor) is an active-site residue.

The protein belongs to the protein kinase superfamily. Ser/Thr protein kinase family. ZRK subfamily.

It carries out the reaction L-seryl-[protein] + ATP = O-phospho-L-seryl-[protein] + ADP + H(+). The enzyme catalyses L-threonyl-[protein] + ATP = O-phospho-L-threonyl-[protein] + ADP + H(+). The polypeptide is Serine/threonine-protein kinase ZRK7 (Arabidopsis thaliana (Mouse-ear cress)).